A 408-amino-acid chain; its full sequence is Secreted mono- and diacylglycerol lipase 2 (408 aa).

Residues 1-24 form the signal peptide; that stretch reads MRFKLADSLSLITVQLILATSTLA. The N-linked (GlcNAc...) asparagine glycan is linked to N177. S217 serves as the catalytic Nucleophile. Catalysis depends on residues D283 and H374.

It belongs to the AB hydrolase superfamily. Lipase family. Class 3 subfamily.

Its subcellular location is the secreted. The enzyme catalyses a monoacylglycerol + H2O = glycerol + a fatty acid + H(+). The catalysed reaction is a diacylglycerol + H2O = a monoacylglycerol + a fatty acid + H(+). Functionally, secreted mono- and diacylglycerol lipase involved in plant virulence. Has a substrate preference for p-nitrophenyl esters with a carbon chain length of C10 (p-nitrophenyl caprate). In Gibberella zeae (strain ATCC MYA-4620 / CBS 123657 / FGSC 9075 / NRRL 31084 / PH-1) (Wheat head blight fungus), this protein is Secreted mono- and diacylglycerol lipase 2.